The chain runs to 299 residues: Phosphatidylserine decarboxylase proenzyme (299 aa).

Active-site charge relay system; for autoendoproteolytic cleavage activity residues include Asp-115, His-171, and Ser-258. Ser-258 acts as the Schiff-base intermediate with substrate; via pyruvic acid; for decarboxylase activity in catalysis. The residue at position 258 (Ser-258) is a Pyruvic acid (Ser); by autocatalysis.

This sequence belongs to the phosphatidylserine decarboxylase family. PSD-B subfamily. Prokaryotic type II sub-subfamily. As to quaternary structure, heterodimer of a large membrane-associated beta subunit and a small pyruvoyl-containing alpha subunit. Requires pyruvate as cofactor. Is synthesized initially as an inactive proenzyme. Formation of the active enzyme involves a self-maturation process in which the active site pyruvoyl group is generated from an internal serine residue via an autocatalytic post-translational modification. Two non-identical subunits are generated from the proenzyme in this reaction, and the pyruvate is formed at the N-terminus of the alpha chain, which is derived from the carboxyl end of the proenzyme. The autoendoproteolytic cleavage occurs by a canonical serine protease mechanism, in which the side chain hydroxyl group of the serine supplies its oxygen atom to form the C-terminus of the beta chain, while the remainder of the serine residue undergoes an oxidative deamination to produce ammonia and the pyruvoyl prosthetic group on the alpha chain. During this reaction, the Ser that is part of the protease active site of the proenzyme becomes the pyruvoyl prosthetic group, which constitutes an essential element of the active site of the mature decarboxylase.

The protein localises to the cell membrane. The catalysed reaction is a 1,2-diacyl-sn-glycero-3-phospho-L-serine + H(+) = a 1,2-diacyl-sn-glycero-3-phosphoethanolamine + CO2. It functions in the pathway phospholipid metabolism; phosphatidylethanolamine biosynthesis; phosphatidylethanolamine from CDP-diacylglycerol: step 2/2. Catalyzes the formation of phosphatidylethanolamine (PtdEtn) from phosphatidylserine (PtdSer). This is Phosphatidylserine decarboxylase proenzyme from Chlamydia felis (strain Fe/C-56) (Chlamydophila felis).